Consider the following 80-residue polypeptide: Phycocyanin-645 alpha-1 chain (80 aa).

Arginine 16 contacts (2R,3E)-phycocyanobilin. 4 residues coordinate mesobiliverdin: cysteine 18, glutamine 24, tyrosine 25, and lysine 40. Residues proline 71 and isoleucine 73 each contribute to the 15,16-dihydrobiliverdin site.

Belongs to the phycoerythrin family. Heterotetramer of 2 different alpha chains and 2 identical beta chains which form 2 alpha-beta heterodimers within the heterotetramer. In terms of processing, contains one phycocyanobilin chromophore, one mesobiliverdin chromophore and one 15,16-dihydrobiliverdin chromophore with binding mediated by both the alpha and beta subunits.

The protein resides in the plastid. It localises to the chloroplast thylakoid membrane. Its function is as follows. Light-harvesting photosynthetic tetrapyrrole chromophore-protein from the phycobiliprotein complex. The sequence is that of Phycocyanin-645 alpha-1 chain from Chroomonas sp.